The chain runs to 296 residues: Acetylglutamate kinase (296 aa).

Residues 69-70, Arg91, and Asn193 each bind substrate; that span reads GG.

Belongs to the acetylglutamate kinase family. ArgB subfamily.

The protein localises to the cytoplasm. The catalysed reaction is N-acetyl-L-glutamate + ATP = N-acetyl-L-glutamyl 5-phosphate + ADP. It functions in the pathway amino-acid biosynthesis; L-arginine biosynthesis; N(2)-acetyl-L-ornithine from L-glutamate: step 2/4. Functionally, catalyzes the ATP-dependent phosphorylation of N-acetyl-L-glutamate. The chain is Acetylglutamate kinase from Paracidovorax citrulli (strain AAC00-1) (Acidovorax citrulli).